A 155-amino-acid polypeptide reads, in one-letter code: Prespore-specific protein E (155 aa).

The first 20 residues, Met-1–Ala-20, serve as a signal peptide directing secretion. N-linked (GlcNAc...) asparagine glycosylation is found at Asn-22, Asn-82, Asn-85, and Asn-102. Ser-105 carries an O-linked (GlcNAc) serine glycan. Asn-133 carries the GPI-like-anchor amidated asparagine lipid modification. A propeptide spans Ser-134–Leu-155 (removed in mature form).

The GPI-like-anchor contains a phosphoceramide group, rather than a phosphatidyl group.

The protein localises to the cell membrane. In Dictyostelium discoideum (Social amoeba), this protein is Prespore-specific protein E (pspE).